A 201-amino-acid polypeptide reads, in one-letter code: MKNCLKIIHWDRCSIEEREKILSRPILDDLSAIKKQVKTIISDVNSLGDQALYNYTNIFDKIKLNNIKISHQDLVKAELCIDVKAKNAIQVAIDNIRTFHISQNISTLNIEINKGIYCQQIVRPIGSVGLYIPGGSAPLLSTVLMLAIPARIAGCKKIVLCSPPPITNEVLYASKICGVQEIFQVGGAQAIAALGFGTETI.

The protein belongs to the histidinol dehydrogenase family. As to quaternary structure, homodimer. Zn(2+) serves as cofactor.

It carries out the reaction L-histidinol + 2 NAD(+) + H2O = L-histidine + 2 NADH + 3 H(+). The protein operates within amino-acid biosynthesis; L-histidine biosynthesis; L-histidine from 5-phospho-alpha-D-ribose 1-diphosphate: step 9/9. Functionally, catalyzes the sequential NAD-dependent oxidations of L-histidinol to L-histidinaldehyde and then to L-histidine. In Buchnera aphidicola subsp. Melaphis rhois, this protein is Histidinol dehydrogenase (hisD).